The sequence spans 876 residues: Valine--tRNA ligase (876 aa).

A 'HIGH' region motif is present at residues 44 to 54 (PNVTGKLHLGH). Positions 520 to 524 (KMSKS) match the 'KMSKS' region motif. Lysine 523 lines the ATP pocket. Positions 805–876 (LEGLIDMDKE…VKARIEQLKA (72 aa)) form a coiled coil.

This sequence belongs to the class-I aminoacyl-tRNA synthetase family. ValS type 1 subfamily. As to quaternary structure, monomer.

The protein resides in the cytoplasm. The catalysed reaction is tRNA(Val) + L-valine + ATP = L-valyl-tRNA(Val) + AMP + diphosphate. In terms of biological role, catalyzes the attachment of valine to tRNA(Val). As ValRS can inadvertently accommodate and process structurally similar amino acids such as threonine, to avoid such errors, it has a 'posttransfer' editing activity that hydrolyzes mischarged Thr-tRNA(Val) in a tRNA-dependent manner. The chain is Valine--tRNA ligase from Staphylococcus aureus (strain MRSA252).